Reading from the N-terminus, the 231-residue chain is Small ribosomal subunit protein uS2 (231 aa).

Residues 1 to 23 form a disordered region; sequence MKVTNLSEKEERGGELTEAEKEE. Residues 7-23 are compositionally biased toward basic and acidic residues; sequence SEKEERGGELTEAEKEE.

It belongs to the universal ribosomal protein uS2 family.

In Saccharolobus solfataricus (strain ATCC 35092 / DSM 1617 / JCM 11322 / P2) (Sulfolobus solfataricus), this protein is Small ribosomal subunit protein uS2 (rps2).